We begin with the raw amino-acid sequence, 382 residues long: Apolipoprotein A-IV (382 aa).

A signal peptide spans 1–20; sequence MFLKAVVLTLSLVAVTGAQA. Repeat copies occupy residues 33–54, 60–81, 82–103, 115–136, 137–158, 159–180, 181–202, 203–224, 225–246, 247–268, 269–286, 287–308, and 309–330. The segment at 33–330 is 13 X 22 AA approximate tandem repeats; the sequence is DYFSQLSNNA…QVEELRQKLG (298 aa).

Belongs to the apolipoprotein A1/A4/E family. In terms of assembly, homodimer. In terms of processing, phosphorylation sites are present in the extracellular medium.

It is found in the secreted. Functionally, may have a role in chylomicrons and VLDL secretion and catabolism. Required for efficient activation of lipoprotein lipase by ApoC-II; potent activator of LCAT. Apoa-IV is a major component of HDL and chylomicrons. This chain is Apolipoprotein A-IV (APOA4), found in Neomonachus schauinslandi (Hawaiian monk seal).